The sequence spans 209 residues: Guanylate kinase (209 aa).

The Guanylate kinase-like domain occupies 10–189; that stretch reads GLLLVLSAPS…AFSDLRSVVV (180 aa). ATP is bound at residue 17 to 24; the sequence is APSGAGKT.

Belongs to the guanylate kinase family.

The protein localises to the cytoplasm. It catalyses the reaction GMP + ATP = GDP + ADP. In terms of biological role, essential for recycling GMP and indirectly, cGMP. The chain is Guanylate kinase from Myxococcus xanthus (strain DK1622).